The primary structure comprises 602 residues: Elongation factor 4 (602 aa).

A tr-type G domain is found at 7–189; sequence KRVRNFSIIA…AVVEKVPYPK (183 aa). GTP contacts are provided by residues 19–24 and 136–139; these read DHGKST and NKID.

The protein belongs to the TRAFAC class translation factor GTPase superfamily. Classic translation factor GTPase family. LepA subfamily.

It is found in the cell membrane. It carries out the reaction GTP + H2O = GDP + phosphate + H(+). Required for accurate and efficient protein synthesis under certain stress conditions. May act as a fidelity factor of the translation reaction, by catalyzing a one-codon backward translocation of tRNAs on improperly translocated ribosomes. Back-translocation proceeds from a post-translocation (POST) complex to a pre-translocation (PRE) complex, thus giving elongation factor G a second chance to translocate the tRNAs correctly. Binds to ribosomes in a GTP-dependent manner. This is Elongation factor 4 from Clostridium tetani (strain Massachusetts / E88).